The primary structure comprises 335 residues: Beta-hexosaminidase (335 aa).

Residues aspartate 60, arginine 68, arginine 133, and 163–164 (KH) contribute to the substrate site. Catalysis depends on histidine 176, which acts as the Proton donor/acceptor. The Nucleophile role is filled by aspartate 247.

This sequence belongs to the glycosyl hydrolase 3 family. NagZ subfamily.

The protein resides in the cytoplasm. The enzyme catalyses Hydrolysis of terminal non-reducing N-acetyl-D-hexosamine residues in N-acetyl-beta-D-hexosaminides.. It participates in cell wall biogenesis; peptidoglycan recycling. Functionally, plays a role in peptidoglycan recycling by cleaving the terminal beta-1,4-linked N-acetylglucosamine (GlcNAc) from peptide-linked peptidoglycan fragments, giving rise to free GlcNAc, anhydro-N-acetylmuramic acid and anhydro-N-acetylmuramic acid-linked peptides. The polypeptide is Beta-hexosaminidase (Stenotrophomonas maltophilia (strain K279a)).